Reading from the N-terminus, the 415-residue chain is Homoserine O-succinyltransferase (415 aa).

Over residues 1–26 (MTSPALTAASVTPSRNTTSPDTTSHR) the composition is skewed to polar residues. The segment at 1–27 (MTSPALTAASVTPSRNTTSPDTTSHRP) is disordered. Positions 71–386 (NAVLICHALN…HGHDAFLLED (316 aa)) constitute an AB hydrolase-1 domain. The active-site Nucleophile is the Ser177. Arg247 contacts substrate. Catalysis depends on residues Asp346 and His379. Asp380 provides a ligand contact to substrate.

This sequence belongs to the AB hydrolase superfamily. MetX family. In terms of assembly, homodimer.

Its subcellular location is the cytoplasm. The enzyme catalyses L-homoserine + succinyl-CoA = O-succinyl-L-homoserine + CoA. Its pathway is amino-acid biosynthesis; L-methionine biosynthesis via de novo pathway; O-succinyl-L-homoserine from L-homoserine: step 1/1. In terms of biological role, transfers a succinyl group from succinyl-CoA to L-homoserine, forming succinyl-L-homoserine. This chain is Homoserine O-succinyltransferase, found in Bordetella avium (strain 197N).